A 123-amino-acid polypeptide reads, in one-letter code: Small ribosomal subunit protein uS12 (123 aa).

Asp89 carries the 3-methylthioaspartic acid modification.

Belongs to the universal ribosomal protein uS12 family. In terms of assembly, part of the 30S ribosomal subunit. Contacts proteins S8 and S17. May interact with IF1 in the 30S initiation complex.

With S4 and S5 plays an important role in translational accuracy. Its function is as follows. Interacts with and stabilizes bases of the 16S rRNA that are involved in tRNA selection in the A site and with the mRNA backbone. Located at the interface of the 30S and 50S subunits, it traverses the body of the 30S subunit contacting proteins on the other side and probably holding the rRNA structure together. The combined cluster of proteins S8, S12 and S17 appears to hold together the shoulder and platform of the 30S subunit. In Gluconacetobacter diazotrophicus (strain ATCC 49037 / DSM 5601 / CCUG 37298 / CIP 103539 / LMG 7603 / PAl5), this protein is Small ribosomal subunit protein uS12.